Consider the following 69-residue polypeptide: Photosystem I reaction center subunit IV (69 aa).

This sequence belongs to the PsaE family.

The protein resides in the cellular thylakoid membrane. Functionally, stabilizes the interaction between PsaC and the PSI core, assists the docking of the ferredoxin to PSI and interacts with ferredoxin-NADP oxidoreductase. The protein is Photosystem I reaction center subunit IV of Prochlorococcus marinus (strain MIT 9215).